The chain runs to 877 residues: Alanine--tRNA ligase (877 aa).

4 residues coordinate Zn(2+): His-565, His-569, Cys-667, and His-671.

It belongs to the class-II aminoacyl-tRNA synthetase family. Requires Zn(2+) as cofactor.

The protein localises to the cytoplasm. It catalyses the reaction tRNA(Ala) + L-alanine + ATP = L-alanyl-tRNA(Ala) + AMP + diphosphate. Functionally, catalyzes the attachment of alanine to tRNA(Ala) in a two-step reaction: alanine is first activated by ATP to form Ala-AMP and then transferred to the acceptor end of tRNA(Ala). Also edits incorrectly charged Ser-tRNA(Ala) and Gly-tRNA(Ala) via its editing domain. The polypeptide is Alanine--tRNA ligase (Chromobacterium violaceum (strain ATCC 12472 / DSM 30191 / JCM 1249 / CCUG 213 / NBRC 12614 / NCIMB 9131 / NCTC 9757 / MK)).